We begin with the raw amino-acid sequence, 110 residues long: Auxin-responsive protein SAUR71 (110 aa).

This sequence belongs to the ARG7 family. In terms of tissue distribution, highly expressed in the steles of roots and hypocotyls.

The protein resides in the cytoplasm. Its function is as follows. Plays a role in the regulation of cell expansion, root meristem patterning and auxin transport. The protein is Auxin-responsive protein SAUR71 of Arabidopsis thaliana (Mouse-ear cress).